Consider the following 339-residue polypeptide: Serpentine receptor class r-10 (339 aa).

Over 1–11 (MSGELWITLVD) the chain is Extracellular. Residues 12-32 (TADIVGVTLTFCVNIVLLGLL) traverse the membrane as a helical segment. Residues 33–42 (KTRGKNLGTY) lie on the Cytoplasmic side of the membrane. The helical transmembrane segment at 43-63 (KYLMAFFSVFSIFYAIIEFIL) threads the bilayer. Residues 64-92 (RPIMHIENTTFFLISRKRFNYSTKLGKIN) lie on the Extracellular side of the membrane. 2 N-linked (GlcNAc...) asparagine glycosylation sites follow: asparagine 71 and asparagine 83. The helical transmembrane segment at 93 to 113 (SAFYCACFATSFVVSGVHFVY) threads the bilayer. Topologically, residues 114-131 (RYFATCKPNLLRLFNLPT) are cytoplasmic. Residues 132 to 152 (LLLWPLGCSVPVTMWASVSYF) traverse the membrane as a helical segment. Residues 153 to 201 (LYPDTEYTEAAVTNVLNNHYNWIKKENVSYIAYVYYQYENGVRHIYLKN) are Extracellular-facing. An N-linked (GlcNAc...) asparagine glycan is attached at asparagine 179. A helical membrane pass occupies residues 202-222 (LLGCFVHYFVMSMTFVVMFYC). The Cytoplasmic segment spans residues 223–254 (GYATWKTMNEHKDVSDRTRALQKQLFKALVLQ). The chain crosses the membrane as a helical span at residues 255-275 (TLIPTIFMYAPTGVMFIAPFF). The Extracellular segment spans residues 276-284 (DVNLNANAN). Residues 285 to 305 (FIVFCSFLYPGLDPLILILII) form a helical membrane-spanning segment. The Cytoplasmic segment spans residues 306 to 339 (RDFRRTIFNFLCGKKNSVDESRSTTRANLSQVPT).

The protein belongs to the nematode receptor-like protein str family. As to quaternary structure, interacts with odr-4. Strongly expressed in the sensory cilia of AWA olfactory neurons, and at low levels in the CEP neurons.

It is found in the cell projection. Its subcellular location is the cilium membrane. In terms of biological role, an odorant receptor which affects chemotaxis to the volatile odorant diacetyl. Specifies AWA neuronal cell fate via the odr-7 pathway. This is Serpentine receptor class r-10 from Caenorhabditis elegans.